The chain runs to 670 residues: Zinc finger protein 526 (670 aa).

C2H2-type zinc fingers lie at residues 57–79, 108–130, and 140–163; these read FMCS…QEQH, FQCG…QDAH, and YQCW…KAQH. Disordered regions lie at residues 168–196 and 217–304; these read VAEP…KMEP and GTHF…ATHP. A compositionally biased stretch (pro residues) spans 171-189; that stretch reads PPVPPPLPPPTPLPPPSPP. The segment at 197-219 adopts a C2H2-type 4 zinc-finger fold; that stretch reads YECPECSTLCATPEEFLEHQGTH. Basic and acidic residues predominate over residues 217-231; the sequence is GTHFDSLEKEERNGL. A compositionally biased stretch (acidic residues) spans 232–263; sequence EEEEEDDEEDEEDDEEMEDEEAMAEVGDDAVG. 9 consecutive C2H2-type zinc fingers follow at residues 305 to 327, 332 to 354, 360 to 382, 388 to 409, 442 to 465, 472 to 494, 500 to 522, 528 to 550, and 573 to 595; these read FHCS…GRAH, HECT…LRLH, YLCV…RRAH, HRCR…RRTH, LPCP…RAVH, HRCG…LRTH, FQCH…QLTH, YQCL…RRLH, and YYCG…QRVH. Residues 409–443 form a disordered region; the sequence is HAGKSGAPPTGATAPPAPAEPTPPPPPPAPPAQLP. Positions 423 to 442 are enriched in pro residues; the sequence is PPAPAEPTPPPPPPAPPAQL. A disordered region spans residues 601 to 621; that stretch reads LTLQPPRSPSPAPPPPPEPQQ. Pro residues predominate over residues 606–619; that stretch reads PRSPSPAPPPPPEP.

It belongs to the krueppel C2H2-type zinc-finger protein family. Widely expressed.

The protein resides in the nucleus. Functionally, may be involved in transcriptional regulation. This Homo sapiens (Human) protein is Zinc finger protein 526 (ZNF526).